Reading from the N-terminus, the 638-residue chain is Chaperone protein DnaK (638 aa).

The residue at position 198 (Thr198) is a Phosphothreonine; by autocatalysis. 2 disordered regions span residues Asp539–Asp559 and Gln602–Lys638. Positions Gly611–Asp623 are enriched in basic and acidic residues. Over residues Asp624–Lys638 the composition is skewed to acidic residues.

It belongs to the heat shock protein 70 family.

Acts as a chaperone. This is Chaperone protein DnaK from Shewanella frigidimarina (strain NCIMB 400).